We begin with the raw amino-acid sequence, 150 residues long: uncharacterized protein (150 aa).

This is an uncharacterized protein from Homo sapiens (Human).